The sequence spans 740 residues: Pheromone-regulated membrane protein 10 (740 aa).

Disordered regions lie at residues 1-48, 65-97, and 241-269; these read MGKN…RSGL, FADEDEVVEQDEAAQKTEAVASESSSLADKEEC, and NQPGGQAPQRPGLRKSAQTLSSETLPTGE. The span at 7 to 18 shows a compositional bias: basic and acidic residues; it reads QAAEGEEARRGS. The segment covering 19-33 has biased composition (low complexity); sequence ESSGSSAEPSGAVAE. Over residues 67-76 the composition is skewed to acidic residues; the sequence is DEDEVVEQDE. The segment covering 256 to 267 has biased composition (polar residues); that stretch reads SAQTLSSETLPT. 10 consecutive transmembrane segments (helical) span residues 422–442, 445–465, 475–495, 499–519, 541–561, 574–594, 599–619, 622–642, 651–671, and 707–727; these read AWMCVLLYGFCASMVTPFAFG, WINLVVSFGIGCCVGLLQFIV, VFEITASIVVSFCARALGSIP, ICFGSTVQGSLALILPGYIIL, IIYSLFLGFGITLGAALFGWI, ELSPWFRFIFVPGFALGLSLI, WSQIPVMVCIACSGYVVTYWS, HFTASTEFTASIGAFVIGIMG, GLAMTAMLPGIFVQVPSGIAS, and ITMIQVCIGISVGLFASTLVV.

The protein belongs to the ThrE exporter (TC 2.A.79) family.

The protein localises to the membrane. This Eremothecium gossypii (strain ATCC 10895 / CBS 109.51 / FGSC 9923 / NRRL Y-1056) (Yeast) protein is Pheromone-regulated membrane protein 10.